The sequence spans 209 residues: Probable GTP-binding protein EngB (209 aa).

One can recognise an EngB-type G domain in the interval 24–198 (EGMEVAFAGR…HGILDQWLGL (175 aa)). GTP contacts are provided by residues 32–39 (GRSNAGKS), 59–63 (GRTQL), 77–80 (DLPG), 144–147 (TKAD), and 177–179 (FSA). Residues Ser-39 and Thr-61 each coordinate Mg(2+).

This sequence belongs to the TRAFAC class TrmE-Era-EngA-EngB-Septin-like GTPase superfamily. EngB GTPase family. Mg(2+) serves as cofactor.

Its function is as follows. Necessary for normal cell division and for the maintenance of normal septation. This is Probable GTP-binding protein EngB from Thioalkalivibrio sulfidiphilus (strain HL-EbGR7).